The chain runs to 493 residues: Guanosine-5'-triphosphate,3'-diphosphate pyrophosphatase (493 aa).

The protein belongs to the GppA/Ppx family. GppA subfamily.

The catalysed reaction is guanosine 3'-diphosphate 5'-triphosphate + H2O = guanosine 3',5'-bis(diphosphate) + phosphate + H(+). The protein operates within purine metabolism; ppGpp biosynthesis; ppGpp from GTP: step 2/2. Functionally, catalyzes the conversion of pppGpp to ppGpp. Guanosine pentaphosphate (pppGpp) is a cytoplasmic signaling molecule which together with ppGpp controls the 'stringent response', an adaptive process that allows bacteria to respond to amino acid starvation, resulting in the coordinated regulation of numerous cellular activities. The chain is Guanosine-5'-triphosphate,3'-diphosphate pyrophosphatase from Salmonella dublin (strain CT_02021853).